Consider the following 280-residue polypeptide: Dermonecrotic toxin LgSicTox-alphaIC1 (280 aa).

Histidine 12 is an active-site residue. Residues glutamate 32 and aspartate 34 each coordinate Mg(2+). Residue histidine 48 is the Nucleophile of the active site. 2 disulfides stabilise this stretch: cysteine 52–cysteine 58 and cysteine 54–cysteine 197. Aspartate 92 is a binding site for Mg(2+).

Belongs to the arthropod phospholipase D family. Class II subfamily. Mg(2+) serves as cofactor. Expressed by the venom gland.

It localises to the secreted. The catalysed reaction is an N-(acyl)-sphingosylphosphocholine = an N-(acyl)-sphingosyl-1,3-cyclic phosphate + choline. It catalyses the reaction an N-(acyl)-sphingosylphosphoethanolamine = an N-(acyl)-sphingosyl-1,3-cyclic phosphate + ethanolamine. It carries out the reaction a 1-acyl-sn-glycero-3-phosphocholine = a 1-acyl-sn-glycero-2,3-cyclic phosphate + choline. The enzyme catalyses a 1-acyl-sn-glycero-3-phosphoethanolamine = a 1-acyl-sn-glycero-2,3-cyclic phosphate + ethanolamine. Functionally, dermonecrotic toxins cleave the phosphodiester linkage between the phosphate and headgroup of certain phospholipids (sphingolipid and lysolipid substrates), forming an alcohol (often choline) and a cyclic phosphate. This toxin acts on sphingomyelin (SM) with high activity. It may also act on ceramide phosphoethanolamine (CPE), lysophosphatidylcholine (LPC) and lysophosphatidylethanolamine (LPE), but not on lysophosphatidylserine (LPS), and lysophosphatidylglycerol (LPG). It acts by transphosphatidylation, releasing exclusively cyclic phosphate products as second products. Induces platelet aggregation in platelet rich plasma, but not in washed platelet, indicating that this activity is dependent on plasma components. Also induces hemolysis. In vivo, the recombinant protein evokes an intense inflammatory reaction and dermonecrosis, similar to those induced by L.gaucho total venom. Is a good immunogen, capable of inducing immunoprotection in test animals. In terms of biological role, anionic antimicrobial peptide that shows antimicrobial activity against Gram-negative bacteria (MIC=1.15-4.6 uM) (tested on E.coli, P.aeruginosa, and E.cloacae), but not on Gram-negative bacteria (M.luteus, S.aureus, and B.subtilis), neither on fungi and yeasts (A.niger, C.albicans and C.krusei). Does not show hemolytic effects against human erythrocytes, and has no cytotoxic effects against human cervical carcinoma cells (HeLa). This is Dermonecrotic toxin LgSicTox-alphaIC1 from Loxosceles gaucho (Spider).